Consider the following 329-residue polypeptide: tRNA-modifying protein YgfZ (329 aa).

Positions 28 and 188 each coordinate folate.

Belongs to the tRNA-modifying YgfZ family.

The protein localises to the cytoplasm. Folate-binding protein involved in regulating the level of ATP-DnaA and in the modification of some tRNAs. It is probably a key factor in regulatory networks that act via tRNA modification, such as initiation of chromosomal replication. In Photorhabdus laumondii subsp. laumondii (strain DSM 15139 / CIP 105565 / TT01) (Photorhabdus luminescens subsp. laumondii), this protein is tRNA-modifying protein YgfZ.